The chain runs to 388 residues: NADH-quinone oxidoreductase subunit D 2 (388 aa).

It belongs to the complex I 49 kDa subunit family. As to quaternary structure, NDH-1 is composed of 14 different subunits. Subunits NuoB, C, D, E, F, and G constitute the peripheral sector of the complex.

It localises to the cell membrane. The catalysed reaction is a quinone + NADH + 5 H(+)(in) = a quinol + NAD(+) + 4 H(+)(out). NDH-1 shuttles electrons from NADH, via FMN and iron-sulfur (Fe-S) centers, to quinones in the respiratory chain. The immediate electron acceptor for the enzyme in this species is believed to be a menaquinone. Couples the redox reaction to proton translocation (for every two electrons transferred, four hydrogen ions are translocated across the cytoplasmic membrane), and thus conserves the redox energy in a proton gradient. The chain is NADH-quinone oxidoreductase subunit D 2 from Salinispora tropica (strain ATCC BAA-916 / DSM 44818 / JCM 13857 / NBRC 105044 / CNB-440).